The following is a 145-amino-acid chain: Large ribosomal subunit protein uL14m (145 aa).

The N-terminal 30 residues, 1 to 30 (MAALTGLWGSFAHVSRAFSQRCFSTSGSLS), are a transit peptide targeting the mitochondrion.

This sequence belongs to the universal ribosomal protein uL14 family. Component of the mitochondrial ribosome large subunit (39S) which comprises a 16S rRNA and about 50 distinct proteins. Interacts with MALSU1.

It is found in the mitochondrion. Its function is as follows. May form part of 2 intersubunit bridges in the assembled ribosome. Upon binding to MALSU1, intersubunit bridge formation is blocked, preventing ribosome formation and repressing translation. In Mus musculus (Mouse), this protein is Large ribosomal subunit protein uL14m (Mrpl14).